The following is a 205-amino-acid chain: Imidazole glycerol phosphate synthase subunit HisH (205 aa).

The 205-residue stretch at 1 to 205 (MVGIVNYNIG…RILKNFCEIG (205 aa)) folds into the Glutamine amidotransferase type-1 domain. The active-site Nucleophile is cysteine 79. Residues histidine 186 and glutamate 188 contribute to the active site.

As to quaternary structure, heterodimer of HisH and HisF.

Its subcellular location is the cytoplasm. It carries out the reaction 5-[(5-phospho-1-deoxy-D-ribulos-1-ylimino)methylamino]-1-(5-phospho-beta-D-ribosyl)imidazole-4-carboxamide + L-glutamine = D-erythro-1-(imidazol-4-yl)glycerol 3-phosphate + 5-amino-1-(5-phospho-beta-D-ribosyl)imidazole-4-carboxamide + L-glutamate + H(+). The enzyme catalyses L-glutamine + H2O = L-glutamate + NH4(+). The protein operates within amino-acid biosynthesis; L-histidine biosynthesis; L-histidine from 5-phospho-alpha-D-ribose 1-diphosphate: step 5/9. IGPS catalyzes the conversion of PRFAR and glutamine to IGP, AICAR and glutamate. The HisH subunit catalyzes the hydrolysis of glutamine to glutamate and ammonia as part of the synthesis of IGP and AICAR. The resulting ammonia molecule is channeled to the active site of HisF. This chain is Imidazole glycerol phosphate synthase subunit HisH, found in Wolinella succinogenes (strain ATCC 29543 / DSM 1740 / CCUG 13145 / JCM 31913 / LMG 7466 / NCTC 11488 / FDC 602W) (Vibrio succinogenes).